The chain runs to 142 residues: Photosystem II extrinsic protein U (142 aa).

The N-terminal stretch at 1-29 is a signal peptide; sequence MKGLVRLLTVFSLLLGCWGWLGTTQIAQA.

This sequence belongs to the PsbU family. PSII is composed of 1 copy each of membrane proteins PsbA, PsbB, PsbC, PsbD, PsbE, PsbF, PsbH, PsbI, PsbJ, PsbK, PsbL, PsbM, PsbT, PsbX, PsbY, PsbZ, Psb30/Ycf12, peripheral proteins PsbO, CyanoQ (PsbQ), PsbU, PsbV and a large number of cofactors. It forms dimeric complexes.

It localises to the cellular thylakoid membrane. One of the extrinsic, lumenal subunits of photosystem II (PSII). PSII is a light-driven water plastoquinone oxidoreductase, using light energy to abstract electrons from H(2)O, generating a proton gradient subsequently used for ATP formation. The extrinsic proteins stabilize the structure of photosystem II oxygen-evolving complex (OEC), the ion environment of oxygen evolution and protect the OEC against heat-induced inactivation. The protein is Photosystem II extrinsic protein U of Nostoc sp. (strain PCC 7120 / SAG 25.82 / UTEX 2576).